The following is a 1399-amino-acid chain: DNA-directed RNA polymerase subunit beta' (1399 aa).

4 residues coordinate Zn(2+): C70, C72, C85, and C88. Mg(2+) contacts are provided by D460, D462, and D464. Positions 814, 888, 895, and 898 each coordinate Zn(2+).

This sequence belongs to the RNA polymerase beta' chain family. As to quaternary structure, the RNAP catalytic core consists of 2 alpha, 1 beta, 1 beta' and 1 omega subunit. When a sigma factor is associated with the core the holoenzyme is formed, which can initiate transcription. Mg(2+) is required as a cofactor. The cofactor is Zn(2+).

The enzyme catalyses RNA(n) + a ribonucleoside 5'-triphosphate = RNA(n+1) + diphosphate. DNA-dependent RNA polymerase catalyzes the transcription of DNA into RNA using the four ribonucleoside triphosphates as substrates. This chain is DNA-directed RNA polymerase subunit beta', found in Pseudomonas fluorescens (strain ATCC BAA-477 / NRRL B-23932 / Pf-5).